We begin with the raw amino-acid sequence, 800 residues long: Fibroblast growth factor receptor 4 (800 aa).

The first 16 residues, 1-16, serve as a signal peptide directing secretion; the sequence is MWLLLALLSIFQETPA. Ig-like C2-type domains lie at 17 to 115, 148 to 236, and 245 to 345; these read FSLE…LIMD, PQRM…YLLD, and PILQ…AWLT. Residues 17-367 lie on the Extracellular side of the membrane; it reads FSLEASEEME…TATSEARYTD (351 aa). Residues Cys-54 and Cys-98 are joined by a disulfide bond. Asn-109 carries an N-linked (GlcNAc...) asparagine glycan. A disulfide bridge connects residues Cys-168 and Cys-220. 3 N-linked (GlcNAc...) asparagine glycosylation sites follow: Asn-254, Asn-286, and Asn-307. Cys-267 and Cys-329 are oxidised to a cystine. Residues 368-388 traverse the membrane as a helical segment; sequence IILYVSGSLALVLLLLLAGVY. Over 389–800 the chain is Cytoplasmic; it reads HRQAIHGHHS…PFPFPEAQTT (412 aa). A Protein kinase domain is found at 465–753; that stretch reads LVLGKPLGEG…VLLAVSEEYL (289 aa). Residues 471–479 and Lys-501 contribute to the ATP site; that span reads LGEGCFGQV. Phosphoserine is present on Ser-571. Residue Asp-610 is the Proton acceptor of the active site. Phosphotyrosine; by autocatalysis is present on residues Tyr-640, Tyr-641, and Tyr-752. The interval 768–800 is disordered; the sequence is DASSTCSSSDSVFSHDPLPLEPSPFPFPEAQTT. Over residues 770–781 the composition is skewed to low complexity; it reads SSTCSSSDSVFS.

The protein belongs to the protein kinase superfamily. Tyr protein kinase family. Fibroblast growth factor receptor subfamily. Monomer. Homodimer after ligand binding. Interacts with FGF1, FGF2, FGF4, FGF6, FGF8, FGF9, FGF16, FGF17, FGF18, FGF19, FGF21 and FGF23 (in vitro). Binding affinity for FGF family members is enhanced by interactions between FGFs and heparan sulfate proteoglycans. Interacts with KLB; this strongly increases the affinity for FGF19 and FGF23. Affinity for FGF19 is strongly increased by KLB and sulfated glycosaminoglycans. KLB and KL both interact with the core-glycosylated FGFR4 in the endoplasmic reticulum and promote its degradation, so that only FGFR4 with fully mature N-glycans is expressed at the cell surface. Identified in a complex with NCAM1, CDH2, PLCG1, FRS2, SRC, SHC1, GAP43 and CTTN. Interacts with MMP14 and HIP1. Interacts with STAT3. In terms of processing, N-glycosylated. Full maturation of the glycan chains in the Golgi is essential for high affinity interaction with FGF19. Post-translationally, ubiquitinated. Subject to proteasomal degradation when not fully glycosylated. Autophosphorylated. Binding of FGF family members together with heparan sulfate proteoglycan or heparin promotes receptor dimerization and autophosphorylation on tyrosine residues. Autophosphorylation occurs in trans between the two FGFR molecules present in the dimer.

It localises to the cell membrane. The protein localises to the endosome. The protein resides in the endoplasmic reticulum. The enzyme catalyses L-tyrosyl-[protein] + ATP = O-phospho-L-tyrosyl-[protein] + ADP + H(+). Its activity is regulated as follows. Present in an inactive conformation in the absence of bound ligand. Ligand binding leads to dimerization and activation by autophosphorylation on tyrosine residues. Tyrosine-protein kinase that acts as a cell-surface receptor for fibroblast growth factors and plays a role in the regulation of cell proliferation, differentiation and migration, and in regulation of lipid metabolism, bile acid biosynthesis, glucose uptake, vitamin D metabolism and phosphate homeostasis. Required for normal down-regulation of the expression of CYP7A1, the rate-limiting enzyme in bile acid synthesis, in response to FGF19. Phosphorylates PLCG1 and FRS2. Ligand binding leads to the activation of several signaling cascades. Activation of PLCG1 leads to the production of the cellular signaling molecules diacylglycerol and inositol 1,4,5-trisphosphate. Phosphorylation of FRS2 triggers recruitment of GRB2, GAB1, PIK3R1 and SOS1, and mediates activation of RAS, MAPK1/ERK2, MAPK3/ERK1 and the MAP kinase signaling pathway, as well as of the AKT1 signaling pathway. Promotes SRC-dependent phosphorylation of the matrix protease MMP14 and its lysosomal degradation. FGFR4 signaling is down-regulated by receptor internalization and degradation; MMP14 promotes internalization and degradation of FGFR4. The protein is Fibroblast growth factor receptor 4 (Fgfr4) of Rattus norvegicus (Rat).